The primary structure comprises 370 residues: Isopentenyl-diphosphate delta-isomerase (370 aa).

8–9 (RK) provides a ligand contact to substrate. FMN contacts are provided by residues T65, 66 to 68 (GMT), S99, and N127. 99–101 (SQR) is a substrate binding site. Q166 is a binding site for substrate. E167 serves as a coordination point for Mg(2+). FMN contacts are provided by residues K198, S223, T228, 277–279 (GMR), and 298–299 (AL).

Belongs to the IPP isomerase type 2 family. Homooctamer. Dimer of tetramers. Requires FMN as cofactor. NADPH is required as a cofactor. The cofactor is Mg(2+).

It is found in the cytoplasm. It catalyses the reaction isopentenyl diphosphate = dimethylallyl diphosphate. In terms of biological role, involved in the biosynthesis of isoprenoids. Catalyzes the 1,3-allylic rearrangement of the homoallylic substrate isopentenyl (IPP) to its allylic isomer, dimethylallyl diphosphate (DMAPP). The protein is Isopentenyl-diphosphate delta-isomerase of Pyrococcus abyssi (strain GE5 / Orsay).